Consider the following 261-residue polypeptide: Ribonuclease 3 (261 aa).

The 125-residue stretch at 20-144 (YFALYRMLGF…FIGAIYLDKG (125 aa)) folds into the RNase III domain. Glu-62 serves as a coordination point for Mg(2+). Asp-66 is an active-site residue. Mg(2+) contacts are provided by Asn-130 and Glu-133. Glu-133 is an active-site residue. Positions 172–241 (NFKSKLFEWC…SQMTWRKIRT (70 aa)) constitute a DRBM domain.

This sequence belongs to the ribonuclease III family. In terms of assembly, homodimer. It depends on Mg(2+) as a cofactor.

The protein localises to the cytoplasm. It carries out the reaction Endonucleolytic cleavage to 5'-phosphomonoester.. Its function is as follows. Digests double-stranded RNA. Involved in the processing of primary rRNA transcript to yield the immediate precursors to the large and small rRNAs (23S and 16S). Processes some mRNAs, and tRNAs when they are encoded in the rRNA operon. Processes pre-crRNA and tracrRNA of type II CRISPR loci if present in the organism. The protein is Ribonuclease 3 of Azobacteroides pseudotrichonymphae genomovar. CFP2.